The following is a 1050-amino-acid chain: Ankyrin repeat domain-containing protein 27 (1050 aa).

The interval 1-372 is sufficient for GEF activity towards RAB21; that stretch reads MALYDEDLLK…RQGSLSAKPP (372 aa). Residues 233–371 form the VPS9 domain; the sequence is ASEDAAFNKI…IRQGSLSAKP (139 aa). ANK repeat units follow at residues 396–426, 462–491, 495–524, 528–560, 564–593, and 597–627; these read SPTD…DKDA, RGHT…VVNA, HGAT…SAEV, NGNT…RLDI, KGDT…SPEI, and LKET…RQKS. A sufficient for interaction with VPS29 region spans residues 396 to 460; sequence SPTDCLFKHI…PSVVTPFSRD (65 aa). Residues 451 to 600 form an interaction with RAB38 region; sequence PSVVTPFSRD…PEIQNRLKET (150 aa). Residues 451-730 are interaction with RAB32; sequence PSVVTPFSRD…APAQKRLAKV (280 aa). A disordered region spans residues 630–665; the sequence is APVQSLQRSVDSISQESSTSSFSSMSAGSRQEETKK. Residues 638 to 658 show a composition bias toward low complexity; it reads SVDSISQESSTSSFSSMSAGS. The tract at residues 658 to 707 is required for interaction with VAMP7; the sequence is SRQEETKKDYREVEKLLRAVADGDLEMVRYLLEWTEEDLEDAEDTVSAVD. ANK repeat units follow at residues 668-698, 743-772, 776-805, 809-838, and 842-871; these read REVE…DLED, DGSS…NAGA, DQAV…KPNK, SGNT…AINT, and KGNT…SVQV. A sufficient for interaction with VPS29 region spans residues 692–746; the sequence is TEEDLEDAEDTVSAVDPEFCHPLCQCPKCAPAQKRLAKVPASGLGVNVTSQDGSS. S962 and S970 each carry phosphoserine. Residues 987–1050 are disordered; that stretch reads PAQSGSHAAE…TPQEVSASRS (64 aa). Over residues 994-1007 the composition is skewed to basic and acidic residues; the sequence is AAEKGNSDWPERPR. Position 1023 is a phosphothreonine (T1023). A compositionally biased stretch (polar residues) spans 1040 to 1050; it reads STPQEVSASRS.

Interacts with RAB21 (GDP-bound form), VPS29, KIF5A, KIF5C, GOLGA4. Interacts with RAB32 (GTP-bound form), RAB38 (GTP-bound form), VAMP7. Interacts with low affinity with RAB5. ANKRD27:RAB32 heterodimers can homodimerize to form tetramers. Can interact with RAB38 or RAB32, VPS29 and VAMP7 simultaneously. A decreased interaction with RAB32 seen in the presence of SGSM2.

Its subcellular location is the early endosome. The protein localises to the late endosome. It localises to the cytoplasmic vesicle membrane. It is found in the lysosome. The protein resides in the cell membrane. Its subcellular location is the melanosome. Functionally, may be a guanine exchange factor (GEF) for Rab21, Rab32 and Rab38 and regulate endosome dynamics. May regulate the participation of VAMP7 in membrane fusion events; in vitro inhibits VAMP7-mediated SNARE complex formation by trapping VAMP7 in a closed, fusogenically inactive conformation. Involved in peripheral melanosomal distribution of TYRP1 in melanocytes; the function, which probably is implicating vesicle-trafficking, includes cooperation with Rab32, Rab38 and VAMP7. Involved in the regulation of neurite growth; the function seems to require its GEF activity, probably towards Rab21, and VAMP7 but not Rab32/38. Proposed to be involved in Golgi sorting of VAMP7 and transport of VAMP7 vesicles to the cell surface; the function seems to implicate kinesin heavy chain isoform 5 proteins, GOLGA4, RAB21 and MACF1. Required for the colocalization of VAMP7 and Rab21, probably on TGN sites. Involved in GLUT1 endosome-to-plasma membrane trafficking; the function is dependent of association with VPS29. Regulates the proper trafficking of melanogenic enzymes TYR, TYRP1 and DCT/TYRP2 to melanosomes in melanocytes. The sequence is that of Ankyrin repeat domain-containing protein 27 (ANKRD27) from Pongo abelii (Sumatran orangutan).